Here is a 469-residue protein sequence, read N- to C-terminus: Glutamate--tRNA ligase (469 aa).

Residues 11 to 21 (PSPTGFIHLGN) carry the 'HIGH' region motif. Residues 118-131 (GEKPRYDGTWRPEP) are compositionally biased toward basic and acidic residues. Positions 118-138 (GEKPRYDGTWRPEPGKVLPEP) are disordered. The short motif at 243–247 (KMSKR) is the 'KMSKS' region element. An ATP-binding site is contributed by K246.

Belongs to the class-I aminoacyl-tRNA synthetase family. Glutamate--tRNA ligase type 1 subfamily. In terms of assembly, monomer.

It localises to the cytoplasm. It carries out the reaction tRNA(Glu) + L-glutamate + ATP = L-glutamyl-tRNA(Glu) + AMP + diphosphate. Functionally, catalyzes the attachment of glutamate to tRNA(Glu) in a two-step reaction: glutamate is first activated by ATP to form Glu-AMP and then transferred to the acceptor end of tRNA(Glu). The chain is Glutamate--tRNA ligase from Burkholderia vietnamiensis (strain G4 / LMG 22486) (Burkholderia cepacia (strain R1808)).